A 60-amino-acid chain; its full sequence is Protein K12 (60 aa).

The protein is Protein K12 (K12) of Human herpesvirus 8 type P (isolate GK18) (HHV-8).